The chain runs to 593 residues: NADH-quinone oxidoreductase subunit C/D (593 aa).

The interval 1 to 184 (MTADNALYIP…DPYSLTLAKQ (184 aa)) is NADH dehydrogenase I subunit C. The NADH dehydrogenase I subunit D stretch occupies residues 208 to 593 (DYMFLNLGPN…IDFVMADVDR (386 aa)).

The protein in the N-terminal section; belongs to the complex I 30 kDa subunit family. It in the C-terminal section; belongs to the complex I 49 kDa subunit family. In terms of assembly, NDH-1 is composed of 13 different subunits. Subunits NuoB, CD, E, F, and G constitute the peripheral sector of the complex.

The protein resides in the cell inner membrane. The catalysed reaction is a quinone + NADH + 5 H(+)(in) = a quinol + NAD(+) + 4 H(+)(out). Its function is as follows. NDH-1 shuttles electrons from NADH, via FMN and iron-sulfur (Fe-S) centers, to quinones in the respiratory chain. The immediate electron acceptor for the enzyme in this species is believed to be ubiquinone. Couples the redox reaction to proton translocation (for every two electrons transferred, four hydrogen ions are translocated across the cytoplasmic membrane), and thus conserves the redox energy in a proton gradient. The chain is NADH-quinone oxidoreductase subunit C/D from Pseudomonas syringae pv. syringae (strain B728a).